Consider the following 511-residue polypeptide: MHQLLENLSGNGMGLLIPLGLSWLIWTILLPKQQYRGKLFNDRARFEWFYTKARRRFLENGGVILNNAFKKSENSFYVMTSREVEIVLNPKYMNEVRNDDRFAVTERVDQLLHGDVPGFGIIKHSAQTHKIFSNTFQSRVVREIGTFLVPIFEEIDHFLETQWTDNEEWHAFSLHPSMVQLVSQESTRLFLGPEMCRDAHWLQASVKYIQSFFMGIDLLDSWRPIFRPLVSKFSKTGKQIRSDLAEARQILSPFIADRQARKAKGEKFNDLLQWFDDAARGAEYDAPLLILRSSMAAVHSTSDLLTKAIFEICTQPGLIDDIREEAIRVFKEHGLRQTAIQELRLTDSVLKETQRLKPLQTTAFIRLTKEDVVLSDGLEIPKGTPIRISNHHMWDPEVSEYPNADQFDGYRFYKLRQVPGQEQTAQLATVSPSHTGFGLGKHACPGRFFAATATKVILCKILLDYDLKLLDGQRPKTMWRGDAQVPDPMCQIVVRRRKEEFNLSSLLHDVK.

The N-linked (GlcNAc...) asparagine glycan is linked to asparagine 7. The helical transmembrane segment at 10-30 threads the bilayer; that stretch reads GNGMGLLIPLGLSWLIWTILL. A heme-binding site is contributed by cysteine 444. The N-linked (GlcNAc...) asparagine glycan is linked to asparagine 502.

Belongs to the cytochrome P450 family. It depends on heme as a cofactor.

The protein resides in the membrane. It functions in the pathway secondary metabolite biosynthesis; terpenoid biosynthesis. In terms of biological role, cytochrome P450 monooxygenase; part of the gene cluster that mediates the biosynthesis of paraherquonin, a meroterpenoid with a unique, highly congested hexacyclic molecular architecture. The first step of the pathway is the synthesis of 3,5-dimethylorsellinic acid (DMOA) by the polyketide synthase prhL. Synthesis of DMOA is followed by farnesylation by the prenyltransferase prhE, methylesterification by the methyl-transferase prhM, epoxidation of the prenyl chain by the flavin-dependent monooxygenase prhF, and cyclization of the farnesyl moiety by the terpene cyclase prhH, to yield the tetracyclic intermediate, protoaustinoid A. The short chain dehydrogenase prhI then oxidizes the C-3 alcohol group of the terpene cyclase product to transform protoaustinoid A into protoaustinoid B. The FAD-binding monooxygenase prhJ catalyzes the oxidation of protoaustinoid B into preaustinoid A which is further oxidized into preaustinoid A1 by FAD-binding monooxygenase phrK. Finally, prhA leads to berkeleydione via the berkeleyone B intermediate. PrhA is a multifunctional dioxygenase that first desaturates at C5-C6 to form berkeleyone B, followed by rearrangement of the A/B-ring to form the cycloheptadiene moiety in berkeleydione. Berkeleydione serves as the key intermediate for the biosynthesis of paraherquonin as well as many other meroterpenoids. The cytochrome P450 monooxygenases prhB, prhD, and prhN, as well as the isomerase prhC, are probably involved in the late stage of paraherquonin biosynthesis, after the production of berkeleydione. Especially prhC might be a multifunctional enzyme that catalyzes the D-ring expansion via intramolecular methoxy rearrangement, as well as the hydrolysis of the expanded D-ring. This is Cytochrome P450 monooxygenase prhD from Penicillium brasilianum.